Here is a 412-residue protein sequence, read N- to C-terminus: Methylmalonic aciduria type A homolog, mitochondrial (412 aa).

The N-terminal 15 residues, 1–15, are a transit peptide targeting the mitochondrion; the sequence is MVVRALVRAHPLSRI. GTP contacts are provided by residues 132 to 140, Asp275, and 311 to 313; these read GSPGVGKSS and SIM.

It belongs to the SIMIBI class G3E GTPase family. ArgK/MeaB subfamily.

It is found in the mitochondrion. Functionally, may have GTPase activity. May also bind and hydrolyze ATP. May function as chaperone. Likely to have a role in propionyl-CoA metabolism and adenosylcobalamin synthesis. The polypeptide is Methylmalonic aciduria type A homolog, mitochondrial (Caenorhabditis briggsae).